Here is a 166-residue protein sequence, read N- to C-terminus: Polyadenylate-binding protein 2 (166 aa).

Positions 55–132 (QSVYVGNVDY…RPLKVTPKRT (78 aa)) constitute an RRM domain. The interval 129 to 166 (PKRTNVPGMSRGRGRGRGRGRGRGRGGYRGRARGFAPY) is disordered. The span at 140–160 (GRGRGRGRGRGRGRGGYRGRA) shows a compositional bias: basic residues.

The protein localises to the nucleus. In Schizosaccharomyces pombe (strain 972 / ATCC 24843) (Fission yeast), this protein is Polyadenylate-binding protein 2 (pab2).